A 462-amino-acid polypeptide reads, in one-letter code: Cysteine--tRNA ligase (462 aa).

C30 is a binding site for Zn(2+). The 'HIGH' region motif lies at 32 to 42; that stretch reads MTVYDYCHVGH. Zn(2+) is bound by residues C214, H239, and E243. Positions 271-275 match the 'KMSKS' region motif; it reads KMSKS. An ATP-binding site is contributed by K274.

It belongs to the class-I aminoacyl-tRNA synthetase family. Monomer. Zn(2+) is required as a cofactor.

The protein localises to the cytoplasm. The catalysed reaction is tRNA(Cys) + L-cysteine + ATP = L-cysteinyl-tRNA(Cys) + AMP + diphosphate. The protein is Cysteine--tRNA ligase of Cupriavidus pinatubonensis (strain JMP 134 / LMG 1197) (Cupriavidus necator (strain JMP 134)).